We begin with the raw amino-acid sequence, 438 residues long: Probable D-serine dehydratase (438 aa).

Lys114 is subject to N6-(pyridoxal phosphate)lysine.

The protein belongs to the serine/threonine dehydratase family. DsdA subfamily. Requires pyridoxal 5'-phosphate as cofactor.

The catalysed reaction is D-serine = pyruvate + NH4(+). The sequence is that of Probable D-serine dehydratase from Histophilus somni (strain 2336) (Haemophilus somnus).